The following is a 160-amino-acid chain: Phosphopantetheine adenylyltransferase (160 aa).

Thr-9 serves as a coordination point for substrate. Residues 9–10 (TF) and His-17 contribute to the ATP site. Lys-41, Leu-73, and Arg-87 together coordinate substrate. ATP is bound by residues 88–90 (GLR), Glu-98, and 123–129 (YSFLSSS).

It belongs to the bacterial CoaD family. Homohexamer. Requires Mg(2+) as cofactor.

It is found in the cytoplasm. It catalyses the reaction (R)-4'-phosphopantetheine + ATP + H(+) = 3'-dephospho-CoA + diphosphate. It functions in the pathway cofactor biosynthesis; coenzyme A biosynthesis; CoA from (R)-pantothenate: step 4/5. Functionally, reversibly transfers an adenylyl group from ATP to 4'-phosphopantetheine, yielding dephospho-CoA (dPCoA) and pyrophosphate. This chain is Phosphopantetheine adenylyltransferase, found in Moorella thermoacetica (strain ATCC 39073 / JCM 9320).